A 293-amino-acid polypeptide reads, in one-letter code: SAGA-associated factor 29 (293 aa).

Residues 12-88 (ELLAELQRLL…KALDKIAEIK (77 aa)) are a coiled coil. Residues 152–293 (GDYVAKPGDK…VVACKETKKK (142 aa)) form the SGF29 C-terminal domain. 2 histone H3K4me3 N-terminus binding regions span residues 194 to 196 (DID) and 240 to 243 (QTTC). The segment at 264–266 (FED) is histone H3K4me3 binding.

The protein belongs to the SGF29 family. In terms of assembly, interacts with dimethylated and trimethylated 'Lys-4' of histone H3 (H3K4me2 and H3K4me3), with a preference for the trimethylated form (H3K4me3). Component of some SAGA-type complexes. Component of the ADA2A-containing complex (ATAC).

It is found in the nucleus. Functionally, chromatin reader component of some histone acetyltransferase (HAT) SAGA-type complexes like the TFTC-HAT, ATAC or STAGA complexes. SGF29 specifically recognizes and binds methylated 'Lys-4' of histone H3 (H3K4me), with a preference for trimethylated form (H3K4me3). In the SAGA-type complexes, SGF29 is required to recruit complexes to H3K4me. Also binds non-histone proteins that are methylated on Lys residues. The polypeptide is SAGA-associated factor 29 (Gallus gallus (Chicken)).